Consider the following 414-residue polypeptide: 2,3-diketo-5-methylthiopentyl-1-phosphate enolase (414 aa).

Catalysis depends on Lys-99, which acts as the Proton acceptor. Substrate-binding positions include Lys-148, 174–177 (KDDE), His-265, Gly-338, and 360–361 (GG). Mg(2+)-binding residues include Lys-174, Asp-176, and Glu-177. An N6-carboxylysine modification is found at Lys-174.

This sequence belongs to the RuBisCO large chain family. Type IV subfamily. As to quaternary structure, homodimer. It depends on Mg(2+) as a cofactor.

The catalysed reaction is 5-methylsulfanyl-2,3-dioxopentyl phosphate = 2-hydroxy-5-methylsulfanyl-3-oxopent-1-enyl phosphate. It functions in the pathway amino-acid biosynthesis; L-methionine biosynthesis via salvage pathway; L-methionine from S-methyl-5-thio-alpha-D-ribose 1-phosphate: step 3/6. Catalyzes the enolization of 2,3-diketo-5-methylthiopentyl-1-phosphate (DK-MTP-1-P) into 2-hydroxy-3-keto-5-methylthiopentenyl-1-phosphate (HK-MTPenyl-1-P). This is 2,3-diketo-5-methylthiopentyl-1-phosphate enolase from Bacillus anthracis (strain CDC 684 / NRRL 3495).